Reading from the N-terminus, the 110-residue chain is UPF0122 protein BCA_3946 (110 aa).

Belongs to the UPF0122 family.

Functionally, might take part in the signal recognition particle (SRP) pathway. This is inferred from the conservation of its genetic proximity to ftsY/ffh. May be a regulatory protein. This Bacillus cereus (strain 03BB102) protein is UPF0122 protein BCA_3946.